Consider the following 279-residue polypeptide: Ribosomal RNA large subunit methyltransferase E (279 aa).

The span at 1 to 10 (MSDDDQKPED) shows a compositional bias: basic and acidic residues. The interval 1-66 (MSDDDQKPED…MKKGGDARAA (66 aa)) is disordered. G136, W138, D154, D170, and D194 together coordinate S-adenosyl-L-methionine. K234 functions as the Proton acceptor in the catalytic mechanism.

The protein belongs to the class I-like SAM-binding methyltransferase superfamily. RNA methyltransferase RlmE family.

Its subcellular location is the cytoplasm. It carries out the reaction uridine(2552) in 23S rRNA + S-adenosyl-L-methionine = 2'-O-methyluridine(2552) in 23S rRNA + S-adenosyl-L-homocysteine + H(+). Specifically methylates the uridine in position 2552 of 23S rRNA at the 2'-O position of the ribose in the fully assembled 50S ribosomal subunit. The protein is Ribosomal RNA large subunit methyltransferase E of Maricaulis maris (strain MCS10) (Caulobacter maris).